The sequence spans 452 residues: Lamina-associated polypeptide 2, isoform beta (452 aa).

Residues 1 to 409 are nucleoplasmic; that stretch reads MPEFLEDPSV…KSEKTKKGRS (409 aa). Positions 5 to 48 constitute an LEM-like domain; that stretch reads LEDPSVLTKDKLKSELVANNVTLPAGEQRKDVYVQLYLQHLTAR. Disordered regions lie at residues 48-113 and 149-264; these read RNRP…DVTE and REQG…VEPS. The linker stretch occupies residues 49–107; it reads NRPPLAAGANSKGPPDFSSDEEREPTPVLGSGASVGRGRGAVGRKATKKTDKPRPEDKD. Residues Ser66 and Ser67 each carry the phosphoserine modification. At Thr74 the chain carries Phosphothreonine. Ser82 carries the post-translational modification Phosphoserine. 2 positions are modified to omega-N-methylarginine: Arg85 and Arg87. The segment covering 96-105 has biased composition (basic and acidic residues); it reads KKTDKPRPED. Residues 108–152 enclose the LEM domain; the sequence is DLDVTELSNEELLEQLVRYGVNPGPIVGTTRKLYEKKLLKLREQG. The segment at 137–242 is NAKAP95-binding N; the sequence is TRKLYEKKLL…TSGSSKGGPL (106 aa). Positions 154–177 are enriched in polar residues; that stretch reads ESRSSTPLPTVSSSAENTRQNGSN. A phosphoserine mark is found at Ser155 and Ser158. Thr159 bears the Phosphothreonine mark. 5 positions are modified to phosphoserine: Ser165, Ser167, Ser176, Ser179, and Ser183. Over residues 178 to 202 the composition is skewed to basic and acidic residues; sequence DSDRYSDNDEDSKIELKLEKREPLK. Lys206 is subject to N6-acetyllysine. The segment at 298–370 is binds lamins B; sequence TGNFKHASSI…SCRRPIKGAA (73 aa). The segment at 299 to 373 is NAKAP95-binding C; it reads GNFKHASSIL…RPIKGAAGRP (75 aa). Ser305, Ser306, and Ser361 each carry phosphoserine. Lys388 carries the post-translational modification N6-acetyllysine. A helical; Signal-anchor for type II membrane protein membrane pass occupies residues 410–430; that stretch reads VPMWIKMLLFALVAGFLFLVY. Residues 431 to 452 lie on the Lumenal side of the membrane; the sequence is QAMETNQGNPFTNFLQDTKISN.

Belongs to the LEM family. As to quaternary structure, interacts with LMNB1, LMNB2, BANF1, AKAP8L, GMCL and chromosomes. Mitosis-specific phosphorylation specifically abolishes its binding to lamin B and chromosomes.

The protein resides in the nucleus inner membrane. Its subcellular location is the chromosome. Its function is as follows. Binds directly to lamin B1 and chromosomes in a mitotic phosphorylation-regulated manner. May play an important role in nuclear envelope reassembly at the end of mitosis and/or anchoring of the nuclear lamina and interphase chromosomes to the nuclear envelope. In Rattus norvegicus (Rat), this protein is Lamina-associated polypeptide 2, isoform beta (Tmpo).